A 581-amino-acid chain; its full sequence is Laccase-1 (581 aa).

An N-terminal signal peptide occupies residues 1–25 (MENLGFLIISTFLLLFTTLLPYSSA). Plastocyanin-like domains follow at residues 34–150 (NVEW…PRQP) and 161–312 (EIPI…YTGK). An N-linked (GlcNAc...) asparagine glycan is attached at asparagine 80. The Cu cation site is built by histidine 84, histidine 86, histidine 129, and histidine 131. 4 N-linked (GlcNAc...) asparagine glycosylation sites follow: asparagine 241, asparagine 300, asparagine 386, and asparagine 403. The Plastocyanin-like 3 domain maps to 429–565 (DFPEKPPNRF…AMGFIVKDGP (137 aa)). Positions 482, 485, 487, 544, 545, 546, and 550 each coordinate Cu cation.

This sequence belongs to the multicopper oxidase family. Cu cation serves as cofactor. As to expression, expressed in roots, stems and flowers.

Its subcellular location is the secreted. It is found in the extracellular space. The protein localises to the apoplast. The catalysed reaction is 4 hydroquinone + O2 = 4 benzosemiquinone + 2 H2O. Functionally, lignin degradation and detoxification of lignin-derived products. This chain is Laccase-1 (LAC1), found in Arabidopsis thaliana (Mouse-ear cress).